Reading from the N-terminus, the 587-residue chain is Prolycopene isomerase 2, chloroplastic (587 aa).

A chloroplast-targeting transit peptide spans 1 to 50; that stretch reads MLCLSLNSSSTSPPKLPLHHSFSRRGIRSWVRSPCVQRKKLGFWSSPKAV.

Belongs to the carotenoid/retinoid oxidoreductase family. CrtISO subfamily. NAD(+) is required as a cofactor. Requires NADP(+) as cofactor. FAD serves as cofactor. As to expression, up-regulated in the flower buds and flower lip tissue, while it is weakly expressed in leaves.

The protein resides in the plastid. Its subcellular location is the chloroplast membrane. The catalysed reaction is 7,7',9,9'-tetra-cis-lycopene = all-trans-lycopene. It participates in carotenoid biosynthesis; lycopene biosynthesis. Carotene cis-trans-isomerase that converts 7,9,9'-tri-cis-neurosporene to 9'-cis-neurosporene and 7,9,9',7'-tetra-cis-lycopene (also known as prolycopene) into all-trans-lycopene. Isomerization requires redox-active components, suggesting that isomerization is achieved by a reversible redox reaction acting at specific double bonds. Isomerizes adjacent cis-double bonds at C7 and C9 pairwise into the trans-configuration, but is incapable of isomerizing single cis-double bonds at C9 and C9'. The protein is Prolycopene isomerase 2, chloroplastic (CRTISO2) of Oncidium hybrid cultivar (Orchid).